Consider the following 133-residue polypeptide: MIIGIGVDIIEIERVRQAIQNNKNFLSKLFTERELDYFISRNMNSEVIAGNFAAKEAVSKALGTGIRGFSFKDIEILRNELGKPEVILHNGANLIGNKLVGNNNSLRVHLSISHNNSSAIAYSVLEGEYYGNM.

Residues D8 and E56 each contribute to the Mg(2+) site.

The protein belongs to the P-Pant transferase superfamily. AcpS family. It depends on Mg(2+) as a cofactor.

The protein resides in the cytoplasm. The catalysed reaction is apo-[ACP] + CoA = holo-[ACP] + adenosine 3',5'-bisphosphate + H(+). Functionally, transfers the 4'-phosphopantetheine moiety from coenzyme A to a Ser of acyl-carrier-protein. The chain is Holo-[acyl-carrier-protein] synthase from Clostridium perfringens (strain 13 / Type A).